Here is a 135-residue protein sequence, read N- to C-terminus: Interleukin-5 (135 aa).

The first 19 residues, 1–19 (MRVLLQLGLLALGAVCVCA), serve as a signal peptide directing secretion. N-linked (GlcNAc...) asparagine glycans are attached at residues Asn48, Asn77, and Asn91.

It belongs to the IL-5 family. As to quaternary structure, homodimer; disulfide-linked. Interacts with IL5RA. Interacts with CSF2RB.

The protein localises to the secreted. Its function is as follows. Homodimeric cytokine expressed predominantly by T-lymphocytes and NK cells that plays an important role in the survival, differentiation, and chemotaxis of eosinophils. Also acts on activated and resting B-cells to induce immunoglobulin production, growth, and differentiation. Mechanistically, exerts its biological effects through a receptor composed of IL5RA subunit and the cytokine receptor common subunit beta/CSF2RB. Binding to the receptor leads to activation of various kinases including LYN, SYK and JAK2 and thereby propagates signals through the RAS-MAPK and JAK-STAT5 pathways respectively. The protein is Interleukin-5 (IL5) of Cavia porcellus (Guinea pig).